We begin with the raw amino-acid sequence, 138 residues long: Basic phospholipase A2 Bs-N6 (138 aa).

The first 16 residues, 1-16 (MRTLWIVAVLLVGVEG), serve as a signal peptide directing secretion. Cystine bridges form between Cys-42–Cys-131, Cys-44–Cys-60, Cys-59–Cys-111, Cys-65–Cys-138, Cys-66–Cys-104, Cys-73–Cys-97, and Cys-91–Cys-102. Ca(2+)-binding residues include Tyr-43, Gly-45, and Gly-47. His-63 is an active-site residue. Position 64 (Asp-64) interacts with Ca(2+). Asp-105 is an active-site residue.

Monomer. Ca(2+) serves as cofactor. Contains 7 disulfide bonds. In terms of tissue distribution, expressed by the venom gland.

Its subcellular location is the secreted. It catalyses the reaction a 1,2-diacyl-sn-glycero-3-phosphocholine + H2O = a 1-acyl-sn-glycero-3-phosphocholine + a fatty acid + H(+). In terms of biological role, snake venom phospholipase A2 (PLA2) that shows myotoxic activities. PLA2 catalyzes the calcium-dependent hydrolysis of the 2-acyl groups in 3-sn-phosphoglycerides. The protein is Basic phospholipase A2 Bs-N6 of Bothriechis schlegelii (Eyelash palm pitviper).